Reading from the N-terminus, the 492-residue chain is Aspartyl/glutamyl-tRNA(Asn/Gln) amidotransferase subunit B (492 aa).

Belongs to the GatB/GatE family. GatB subfamily. As to quaternary structure, heterotrimer of A, B and C subunits.

It carries out the reaction L-glutamyl-tRNA(Gln) + L-glutamine + ATP + H2O = L-glutaminyl-tRNA(Gln) + L-glutamate + ADP + phosphate + H(+). It catalyses the reaction L-aspartyl-tRNA(Asn) + L-glutamine + ATP + H2O = L-asparaginyl-tRNA(Asn) + L-glutamate + ADP + phosphate + 2 H(+). Allows the formation of correctly charged Asn-tRNA(Asn) or Gln-tRNA(Gln) through the transamidation of misacylated Asp-tRNA(Asn) or Glu-tRNA(Gln) in organisms which lack either or both of asparaginyl-tRNA or glutaminyl-tRNA synthetases. The reaction takes place in the presence of glutamine and ATP through an activated phospho-Asp-tRNA(Asn) or phospho-Glu-tRNA(Gln). The chain is Aspartyl/glutamyl-tRNA(Asn/Gln) amidotransferase subunit B from Bradyrhizobium sp. (strain BTAi1 / ATCC BAA-1182).